Reading from the N-terminus, the 55-residue chain is Large ribosomal subunit protein bL33 (55 aa).

This sequence belongs to the bacterial ribosomal protein bL33 family.

This is Large ribosomal subunit protein bL33 from Azoarcus sp. (strain BH72).